The chain runs to 258 residues: Small ribosomal subunit protein uS15m (258 aa).

The N-terminal 57 residues, 1-57 (MLRAAWRALSSVRAQAVTRAPVPALRGGSSASLLSARCGLQPPSLLRAARAYAAVQK), are a transit peptide targeting the mitochondrion. Residues 229-258 (KAAAAAAKKEKNEGVPENPSNAVPEKTQVN) are disordered.

It belongs to the universal ribosomal protein uS15 family. Component of the mitochondrial ribosome small subunit (28S) which comprises a 12S rRNA and about 30 distinct proteins. Interacts with METTL17.

The protein localises to the mitochondrion matrix. This chain is Small ribosomal subunit protein uS15m (Mrps15), found in Mus musculus (Mouse).